Consider the following 219-residue polypeptide: NADH-quinone oxidoreductase subunit C (219 aa).

This sequence belongs to the complex I 30 kDa subunit family. In terms of assembly, NDH-1 is composed of 14 different subunits. Subunits NuoB, C, D, E, F, and G constitute the peripheral sector of the complex.

The protein localises to the cell inner membrane. The enzyme catalyses a quinone + NADH + 5 H(+)(in) = a quinol + NAD(+) + 4 H(+)(out). Its function is as follows. NDH-1 shuttles electrons from NADH, via FMN and iron-sulfur (Fe-S) centers, to quinones in the respiratory chain. The immediate electron acceptor for the enzyme in this species is believed to be ubiquinone. Couples the redox reaction to proton translocation (for every two electrons transferred, four hydrogen ions are translocated across the cytoplasmic membrane), and thus conserves the redox energy in a proton gradient. This chain is NADH-quinone oxidoreductase subunit C, found in Methylorubrum populi (strain ATCC BAA-705 / NCIMB 13946 / BJ001) (Methylobacterium populi).